We begin with the raw amino-acid sequence, 132 residues long: Cytochrome b5 (132 aa).

In terms of domain architecture, Cytochrome b5 heme-binding spans 2 to 78; the sequence is GKIFTLAEVA…LDEYYVGDID (77 aa). His-37 and His-61 together coordinate heme. Residues 104–124 form a helical membrane-spanning segment; that stretch reads FVIKLLQFLVPLVILAGAIGI.

It belongs to the cytochrome b5 family.

The protein localises to the endoplasmic reticulum membrane. The protein resides in the microsome membrane. In terms of biological role, membrane bound hemoprotein which function as an electron carrier for several membrane bound oxygenases. The protein is Cytochrome b5 of Borago officinalis (Bourrache).